A 290-amino-acid polypeptide reads, in one-letter code: 4-diphosphocytidyl-2-C-methyl-D-erythritol kinase (290 aa).

Lys-14 is an active-site residue. An ATP-binding site is contributed by 103 to 113; it reads PMGGGLGGGSS. The active site involves Asp-145.

It belongs to the GHMP kinase family. IspE subfamily. In terms of assembly, homodimer.

The catalysed reaction is 4-CDP-2-C-methyl-D-erythritol + ATP = 4-CDP-2-C-methyl-D-erythritol 2-phosphate + ADP + H(+). It participates in isoprenoid biosynthesis; isopentenyl diphosphate biosynthesis via DXP pathway; isopentenyl diphosphate from 1-deoxy-D-xylulose 5-phosphate: step 3/6. Functionally, catalyzes the phosphorylation of the position 2 hydroxy group of 4-diphosphocytidyl-2C-methyl-D-erythritol. This is 4-diphosphocytidyl-2-C-methyl-D-erythritol kinase from Pectobacterium carotovorum subsp. carotovorum (strain PC1).